A 239-amino-acid chain; its full sequence is MAAVPSAVHLPRCVVSPTGRHSASLIFLHGSGHSGQGQREWIKHVLNQDLTFQHIKIIYPTAPSRPYTPLKGGLSNVWFDRFKISMDCPEHLESIDSMCQVLSGLIDEEVKTGIQKSRILIGGFSMGGCMAMHLAYRSHPDVAGVFVLSGFLNKASVVYQDLQQGGRMLPELFQCHGSADNLVLHAWGKETNSKLKSLGVSTTFHSLPNLNHELNKTELEKLKSWILTRLPGETDGQSE.

An N-acetylalanine modification is found at Ala-2. Active-site charge relay system residues include Ser-125, Asp-180, and His-212.

The protein belongs to the AB hydrolase superfamily. AB hydrolase 2 family.

It localises to the cytoplasm. Its subcellular location is the cytosol. It carries out the reaction S-hexadecanoyl-L-cysteinyl-[protein] + H2O = L-cysteinyl-[protein] + hexadecanoate + H(+). Palmitoyl thioesterase that catalyzes depalmitoylation of CGAS and KCNMA1. Acts as a regulator of innate immunity by mediating depalmitoylation of CGAS, thereby preventing CGAS homodimerization and cyclic GMP-AMP synthase activity. Does not exhibit phospholipase nor triacylglycerol lipase activity, able to hydrolyze only short chain substrates due to its shallow active site. The protein is Lysophospholipase-like protein 1 of Mus musculus (Mouse).